We begin with the raw amino-acid sequence, 480 residues long: ATP synthase subunit beta 1 (480 aa).

Residue 154-161 (GGAGVGKT) coordinates ATP.

It belongs to the ATPase alpha/beta chains family. F-type ATPases have 2 components, CF(1) - the catalytic core - and CF(0) - the membrane proton channel. CF(1) has five subunits: alpha(3), beta(3), gamma(1), delta(1), epsilon(1). CF(0) has four main subunits: a(1), b(1), b'(1) and c(9-12).

The protein resides in the cell inner membrane. It carries out the reaction ATP + H2O + 4 H(+)(in) = ADP + phosphate + 5 H(+)(out). Functionally, produces ATP from ADP in the presence of a proton gradient across the membrane. The catalytic sites are hosted primarily by the beta subunits. In Bradyrhizobium sp. (strain BTAi1 / ATCC BAA-1182), this protein is ATP synthase subunit beta 1.